Reading from the N-terminus, the 103-residue chain is Thioredoxin-1 (103 aa).

A Thioredoxin domain is found at valine 2 to leucine 103. Residues cysteine 30 and cysteine 33 each act as nucleophile in the active site. The cysteines at positions 30 and 33 are disulfide-linked.

This sequence belongs to the thioredoxin family.

Functionally, participates in various redox reactions through the reversible oxidation of its active center dithiol to a disulfide and catalyzes dithiol-disulfide exchange reactions. The sequence is that of Thioredoxin-1 (trx1) from Schizosaccharomyces pombe (strain 972 / ATCC 24843) (Fission yeast).